Reading from the N-terminus, the 380-residue chain is RNA-binding motif protein, Y chromosome (380 aa).

The 79-residue stretch at 8–86 folds into the RRM domain; sequence GKIFIGGLNI…KRIKVKQARR (79 aa). Disordered regions lie at residues 82 to 226 and 279 to 358; these read KQAR…STSR and HEAP…YSAS. Residues 166–178 are compositionally biased toward polar residues; the sequence is RSATSAQTRSNTG. 2 stretches are compositionally biased toward basic and acidic residues: residues 180-190 and 333-351; these read RGREPHRREIS and IDRE…HSPK.

Interacts with SRSF3/SRP20, SRSF9/SRP30, SRSF5/SRP40, and SRSF6/SRP55; this interaction inhibits SRSF family member pre-mRNA splicing. Interacts with splicing factor proteins and KHDRBS3. As to expression, testis-specific.

It is found in the nucleus. Its function is as follows. RNA-binding protein involved in pre-mRNA splicing. Required for sperm development. Acts additively with TRA2B to promote exon 7 inclusion of the survival motor neuron SMN. Binds non-specifically to mRNAs. The chain is RNA-binding motif protein, Y chromosome from Mus musculus (Mouse).